The sequence spans 33 residues: GLWSTIKQKGKEAAIAAAKAAGQAALNAASEAL.

Leucine 33 carries the post-translational modification Leucine amide.

It belongs to the frog skin active peptide (FSAP) family. Dermaseptin subfamily. In terms of tissue distribution, expressed by the skin glands.

The protein localises to the secreted. Functionally, has antimicrobial activity. The sequence is that of Dermaseptin-H9 from Pithecopus hypochondrialis (Orange-legged leaf frog).